The sequence spans 908 residues: Probable serine/threonine-protein kinase DDB_G0278521 (908 aa).

The Extracellular portion of the chain corresponds to 1–153 (MSNNKIIESL…RGEKLSTLDR (153 aa)). The helical transmembrane segment at 154–174 (IICFSIIYSQDQILLFLLNFI) threads the bilayer. The Cytoplasmic segment spans residues 175-908 (LSNINCNNNN…SDQNDSDLYD (734 aa)). ANK repeat units follow at residues 258 to 289 (LKVY…NVYN), 300 to 326 (TNRS…NIHD), 330 to 361 (KGML…ALDQ), 362 to 391 (SNNT…RLSI), and 395 to 424 (NGRY…KMNS). Over residues 461 to 472 (NSNNLTNSNSSS) the composition is skewed to low complexity. The disordered stretch occupies residues 461-491 (NSNNLTNSNSSSVGGLRISNGGNTQQQSIQI). Polar residues predominate over residues 480 to 490 (NGGNTQQQSIQ). An ANK 6 repeat occupies 495 to 524 (ENNTPIDLLVLNNHFTIAIELLKYEGYIVG). In terms of domain architecture, Protein kinase spans 530 to 817 (FKTARKIGAG…LPIANIPKFL (288 aa)). Residues 536–544 (IGAGAFGDV) and Lys557 contribute to the ATP site. Catalysis depends on Asp677, which acts as the Proton acceptor.

It belongs to the protein kinase superfamily. TKL Ser/Thr protein kinase family.

It localises to the membrane. The catalysed reaction is L-seryl-[protein] + ATP = O-phospho-L-seryl-[protein] + ADP + H(+). The enzyme catalyses L-threonyl-[protein] + ATP = O-phospho-L-threonyl-[protein] + ADP + H(+). This Dictyostelium discoideum (Social amoeba) protein is Probable serine/threonine-protein kinase DDB_G0278521.